A 240-amino-acid polypeptide reads, in one-letter code: ATP-dependent dethiobiotin synthetase BioD (240 aa).

An ATP-binding site is contributed by Glu-15–Phe-20. Thr-19 lines the Mg(2+) pocket. Lys-40 is a catalytic residue. ATP contacts are provided by residues Asp-57, Glu-118–Gly-121, and Asn-178–Arg-179. The Mg(2+) site is built by Asp-57 and Glu-118.

Belongs to the dethiobiotin synthetase family. As to quaternary structure, homodimer. The cofactor is Mg(2+).

It localises to the cytoplasm. The enzyme catalyses (7R,8S)-7,8-diammoniononanoate + CO2 + ATP = (4R,5S)-dethiobiotin + ADP + phosphate + 3 H(+). Its pathway is cofactor biosynthesis; biotin biosynthesis; biotin from 7,8-diaminononanoate: step 1/2. Catalyzes a mechanistically unusual reaction, the ATP-dependent insertion of CO2 between the N7 and N8 nitrogen atoms of 7,8-diaminopelargonic acid (DAPA, also called 7,8-diammoniononanoate) to form a ureido ring. In Burkholderia pseudomallei (strain K96243), this protein is ATP-dependent dethiobiotin synthetase BioD.